A 156-amino-acid chain; its full sequence is Small ribosomal subunit protein uS7 (156 aa).

The protein belongs to the universal ribosomal protein uS7 family. As to quaternary structure, part of the 30S ribosomal subunit. Contacts proteins S9 and S11.

Its function is as follows. One of the primary rRNA binding proteins, it binds directly to 16S rRNA where it nucleates assembly of the head domain of the 30S subunit. Is located at the subunit interface close to the decoding center, probably blocks exit of the E-site tRNA. In Pseudomonas syringae pv. tomato (strain ATCC BAA-871 / DC3000), this protein is Small ribosomal subunit protein uS7.